The primary structure comprises 75 residues: Small ribosomal subunit protein bS18c (75 aa).

This sequence belongs to the bacterial ribosomal protein bS18 family. As to quaternary structure, part of the 30S ribosomal subunit.

Its subcellular location is the plastid. The protein resides in the chloroplast. This chain is Small ribosomal subunit protein bS18c, found in Angiopteris evecta (Mule's foot fern).